The sequence spans 1173 residues: Calcium-transporting ATPase 2 (1173 aa).

Residues 1–24 (MSRQDENSALLANNENNKPSYTGN) are disordered. Residues 1-114 (MSRQDENSAL…LQLVWAAFND (114 aa)) lie on the Cytoplasmic side of the membrane. A compositionally biased stretch (low complexity) spans 7-17 (NSALLANNENN). Residues 115-139 (KTMQLLTVAAVVSFVLGLYELWMQP) traverse the membrane as a helical segment. Residues 140–152 (PQYDPEGNKIKQV) are Vacuolar-facing. Residues 153–173 (DWIEGVAIMIAVFVVVLVSAA) form a helical membrane-spanning segment. Residues 174–349 (NDYQKELQFA…LADNISVYGC (176 aa)) lie on the Cytoplasmic side of the membrane. The helical transmembrane segment at 350 to 368 (VSAIILFLVLFTRYLFYII) threads the bilayer. The Vacuolar portion of the chain corresponds to 369–388 (PEDGRFHDLDPAQKGSKFMN). A helical membrane pass occupies residues 389–409 (IFITSITVIVVAVPEGLPLAV). 2 residues coordinate Ca(2+): Val398 and Glu403. The Cytoplasmic portion of the chain corresponds to 410 to 899 (TLALAFATTR…RCVSVSIKKF (490 aa)). Asp445 functions as the 4-aspartylphosphate intermediate in the catalytic mechanism. The Mg(2+) site is built by Asp445 and Thr447. ATP-binding positions include Thr447, Lys643, 762–764 (TGD), Arg816, and Lys822. Residue Asp841 coordinates Mg(2+). Asn844 contributes to the ATP binding site. A helical membrane pass occupies residues 900–922 (IQFQLIVNITAVILTFVSSVASS). Asn907 contributes to the Ca(2+) binding site. Over 923–929 (DETSVLT) the chain is Vacuolar. Residues 930–950 (AVQLLWINLIMDTLAALALAT) traverse the membrane as a helical segment. Ca(2+)-binding residues include Asn937 and Asp941. Residues 951 to 976 (DKPDPNIMDRKPRGRSTSLISVSTWK) are Cytoplasmic-facing. The helical transmembrane segment at 977 to 998 (MILSQATLQLIVTFILHFYGPE) threads the bilayer. Topologically, residues 999–1010 (LFFKKHEDEITS) are vacuolar. A helical membrane pass occupies residues 1011 to 1029 (HQQQQLNAMTFNTFVWLQF). At 1030-1065 (FTMLVSRKLDEGDGISNWRGRISAANLNFFQDLGRN) the chain is on the cytoplasmic side. Residues 1066-1086 (YYFLTIMAIIGSCQVLIMFFG) form a helical membrane-spanning segment. The Vacuolar portion of the chain corresponds to 1087 to 1099 (GAPFSIARQTKSM). Residues 1100–1120 (WITAVLCGMLSLIMGVLVRIC) traverse the membrane as a helical segment. Over 1121–1173 (PDEVAVKVFPAAFVQRFKYVFGLEFLRKNHTGKHDDEEALLEESDSPESTAFY) the chain is Cytoplasmic.

This sequence belongs to the cation transport ATPase (P-type) (TC 3.A.3) family.

Its subcellular location is the vacuole membrane. The enzyme catalyses Ca(2+)(in) + ATP + H2O = Ca(2+)(out) + ADP + phosphate + H(+). Its function is as follows. This magnesium-dependent enzyme catalyzes the hydrolysis of ATP coupled with the transport of calcium. Transports the calcium to the vacuole and participates in the control of the cytosolic free calcium. The protein is Calcium-transporting ATPase 2 (PMC1) of Saccharomyces cerevisiae (strain ATCC 204508 / S288c) (Baker's yeast).